Reading from the N-terminus, the 459-residue chain is Kelch-like protein terF (459 aa).

6 Kelch repeats span residues 92 to 144, 145 to 196, 198 to 248, 251 to 304, 306 to 354, and 355 to 405; these read STVV…LVGD, EIFV…VVDG, IYYL…TVVV, TIYL…IYRD, LYIL…TIGS, and LIFT…VYKG.

Its pathway is secondary metabolite biosynthesis. Its function is as follows. Kelch-like protein; part of the gene cluster that mediates the biosynthesis of terrein, a fungal metabolite with ecological, antimicrobial, antiproliferative, and antioxidative activities. The first step in the pathway is performed by the polyketide synthase terA that produces 4-hydroxy-6-methylpyranon (4-HMP), orsellinic acid (OA), and 2,3-dehydro-6-hydroxymellein (2,3-dehydro-6-HM) by condensing acetyl-CoA with two, three, or four malonyl-CoA units, respectively. 4-HMP and OA are not pathway intermediates, but are rather shunt or side products. 2,3-dehydro-6-HM is further converted to 6-hydroxymellein (6-HM) by the 6-hydroxymellein synthase terB. The monooxygenases terC and terD, the multicopper oxidase terE and the Kelch-like protein terF are then involved in the transformation of 6-HM to terrein. Even if they are co-regulated with the other terrein cluster genes, terH and terI seem to be dispensable for terrein production; whereas one or both of the 2 transporters terG and terJ are probably required for efficient secretion of metabolites. The chain is Kelch-like protein terF from Aspergillus terreus (strain NIH 2624 / FGSC A1156).